Here is a 307-residue protein sequence, read N- to C-terminus: MAKKKIAISCGDIQGVGLELILKSHKEVNAFCEPLYLIDGELLERANQLLHNAYETKTLNTLAIHSPLPLLNSSTIGKVSAQSGAYSFESFKKACELADSKEVDGICTLPINKLAWQQAQIPFVGHTDFLKQRYKDHQIIMMLGCSKLFVGLFSDHVPLGAVSQLIQVKALVKFLLAFQKSTQAKIVQVCGFNPHAGEEGLFGKEDEKILKAIQKSNQTLGFECFLGPLPADSAFAPNKRQITPFYVSMSHDVGLAPLKALYFDESINVSLNAPILRASTDHGTAFDIAYQNKANNKSYLNAIKYLA.

H126 and T127 together coordinate substrate. Residues H156, H195, and H251 each coordinate a divalent metal cation. Positions 259, 268, and 277 each coordinate substrate.

This sequence belongs to the PdxA family. As to quaternary structure, homodimer. Zn(2+) is required as a cofactor. The cofactor is Mg(2+). It depends on Co(2+) as a cofactor.

The protein localises to the cytoplasm. The catalysed reaction is 4-(phosphooxy)-L-threonine + NAD(+) = 3-amino-2-oxopropyl phosphate + CO2 + NADH. The protein operates within cofactor biosynthesis; pyridoxine 5'-phosphate biosynthesis; pyridoxine 5'-phosphate from D-erythrose 4-phosphate: step 4/5. Catalyzes the NAD(P)-dependent oxidation of 4-(phosphooxy)-L-threonine (HTP) into 2-amino-3-oxo-4-(phosphooxy)butyric acid which spontaneously decarboxylates to form 3-amino-2-oxopropyl phosphate (AHAP). In Helicobacter pylori (strain G27), this protein is 4-hydroxythreonine-4-phosphate dehydrogenase.